A 90-amino-acid chain; its full sequence is Probable Fe(2+)-trafficking protein (90 aa).

Belongs to the Fe(2+)-trafficking protein family.

Could be a mediator in iron transactions between iron acquisition and iron-requiring processes, such as synthesis and/or repair of Fe-S clusters in biosynthetic enzymes. The protein is Probable Fe(2+)-trafficking protein of Delftia acidovorans (strain DSM 14801 / SPH-1).